We begin with the raw amino-acid sequence, 399 residues long: Tryptophan synthase beta chain (399 aa).

Lysine 92 carries the N6-(pyridoxal phosphate)lysine modification.

The protein belongs to the TrpB family. Tetramer of two alpha and two beta chains. The cofactor is pyridoxal 5'-phosphate.

The enzyme catalyses (1S,2R)-1-C-(indol-3-yl)glycerol 3-phosphate + L-serine = D-glyceraldehyde 3-phosphate + L-tryptophan + H2O. It functions in the pathway amino-acid biosynthesis; L-tryptophan biosynthesis; L-tryptophan from chorismate: step 5/5. Its function is as follows. The beta subunit is responsible for the synthesis of L-tryptophan from indole and L-serine. The sequence is that of Tryptophan synthase beta chain from Bordetella petrii (strain ATCC BAA-461 / DSM 12804 / CCUG 43448).